Reading from the N-terminus, the 316-residue chain is MYTKILGTGSYLPVQVRSNADLEKMVDTSDEWIVTRTGIRERRIAGLDETVATMGFQAAEKALEMAGIDKDDIGLIIVATTSSSHAFPSSACQVQRMLGIKDAASFDLAAACAGFTYALSVADQYVKSGAVKHAIVIGSDVLSRALDPEDRGTIILFGDGAGAVVLGASEQPGIMSTHLHADGRYGELLALPYPDRQQDQPAYVTMAGNEVFKVAVTELAHIVDETLQANNLDRTALDWLVPHQANLRIISATAKKLGMGMDKVVITLDRHGNTSAASVPSAFDEAVRDGRIQRGQLVLLEAFGGGFTWGSALVRF.

Residues Cys-112 and His-243 contribute to the active site. The ACP-binding stretch occupies residues 244-248 (QANLR). The active site involves Asn-273.

It belongs to the thiolase-like superfamily. FabH family. In terms of assembly, homodimer.

The protein localises to the cytoplasm. It catalyses the reaction malonyl-[ACP] + acetyl-CoA + H(+) = 3-oxobutanoyl-[ACP] + CO2 + CoA. The protein operates within lipid metabolism; fatty acid biosynthesis. Functionally, catalyzes the condensation reaction of fatty acid synthesis by the addition to an acyl acceptor of two carbons from malonyl-ACP. Catalyzes the first condensation reaction which initiates fatty acid synthesis and may therefore play a role in governing the total rate of fatty acid production. Possesses both acetoacetyl-ACP synthase and acetyl transacylase activities. Its substrate specificity determines the biosynthesis of branched-chain and/or straight-chain of fatty acids. The polypeptide is Beta-ketoacyl-[acyl-carrier-protein] synthase III (Yersinia pseudotuberculosis serotype O:1b (strain IP 31758)).